The following is a 540-amino-acid chain: Acyl-CoA synthetase 7 (540 aa).

ATP-binding positions include 186–194, aspartate 415, arginine 430, and lysine 522; that span reads SSGTTGKPK. A Microbody targeting signal motif is present at residues 538-540; it reads AKL.

This sequence belongs to the ATP-dependent AMP-binding enzyme family. Expressed in intestine.

It localises to the peroxisome. The catalysed reaction is nonanoate + ATP + CoA = nonanoyl-CoA + AMP + diphosphate. It carries out the reaction IC-asc-C7 + ATP + CoA = IC-asc-C7-CoA + AMP + diphosphate. The enzyme catalyses IC-asc-C9 + ATP + CoA = IC-asc-C9-CoA + AMP + diphosphate. Plays a role in ascaroside pheromones biosynthesis, which regulates development and behavior. Specifically, activates the side chain of medium-chain indol-3-carbonyl (IC)-ascarosides for shortening through beta-oxidation. Converts IC-asc-C7 and IC-asc-C9 into IC-asc-C7-CoA and IC-asc-C9-CoA, respectively. May play a role in fatty-acid metabolism by activating and converting nonanoate (C9) into nonanoyl-CoA (C9-CoA). This chain is Acyl-CoA synthetase 7, found in Caenorhabditis elegans.